Reading from the N-terminus, the 512-residue chain is Cytochrome P450 72A13 (512 aa).

A helical transmembrane segment spans residues Glu-2–Trp-22. A heme-binding site is contributed by Cys-460.

Belongs to the cytochrome P450 family. Heme serves as cofactor.

The protein resides in the membrane. The polypeptide is Cytochrome P450 72A13 (CYP72A13) (Arabidopsis thaliana (Mouse-ear cress)).